Consider the following 201-residue polypeptide: 3-isopropylmalate dehydratase small subunit (201 aa).

This sequence belongs to the LeuD family. LeuD type 1 subfamily. As to quaternary structure, heterodimer of LeuC and LeuD.

It catalyses the reaction (2R,3S)-3-isopropylmalate = (2S)-2-isopropylmalate. It functions in the pathway amino-acid biosynthesis; L-leucine biosynthesis; L-leucine from 3-methyl-2-oxobutanoate: step 2/4. Its function is as follows. Catalyzes the isomerization between 2-isopropylmalate and 3-isopropylmalate, via the formation of 2-isopropylmaleate. This Erwinia tasmaniensis (strain DSM 17950 / CFBP 7177 / CIP 109463 / NCPPB 4357 / Et1/99) protein is 3-isopropylmalate dehydratase small subunit.